We begin with the raw amino-acid sequence, 277 residues long: Large ribosomal subunit protein uL2 (277 aa).

Positions 219–277 (TVRGSVMNPNDHPHGGGEGKAPVGRKAPSTPWGKPALGLKTRNKKAKSNKLIVRRRNEK) are disordered. Residues 259-277 (TRNKKAKSNKLIVRRRNEK) are compositionally biased toward basic residues.

The protein belongs to the universal ribosomal protein uL2 family. Part of the 50S ribosomal subunit. Forms a bridge to the 30S subunit in the 70S ribosome.

One of the primary rRNA binding proteins. Required for association of the 30S and 50S subunits to form the 70S ribosome, for tRNA binding and peptide bond formation. It has been suggested to have peptidyltransferase activity; this is somewhat controversial. Makes several contacts with the 16S rRNA in the 70S ribosome. This is Large ribosomal subunit protein uL2 from Streptococcus equi subsp. zooepidemicus (strain MGCS10565).